Here is a 293-residue protein sequence, read N- to C-terminus: 33 kDa chaperonin (293 aa).

Intrachain disulfides connect C230–C232 and C263–C266.

The protein belongs to the HSP33 family. Under oxidizing conditions two disulfide bonds are formed involving the reactive cysteines. Under reducing conditions zinc is bound to the reactive cysteines and the protein is inactive.

It localises to the cytoplasm. Redox regulated molecular chaperone. Protects both thermally unfolding and oxidatively damaged proteins from irreversible aggregation. Plays an important role in the bacterial defense system toward oxidative stress. This chain is 33 kDa chaperonin, found in Edwardsiella ictaluri (strain 93-146).